The chain runs to 143 residues: Large ribosomal subunit protein uL11 (143 aa).

The protein belongs to the universal ribosomal protein uL11 family. As to quaternary structure, part of the ribosomal stalk of the 50S ribosomal subunit. Interacts with L10 and the large rRNA to form the base of the stalk. L10 forms an elongated spine to which L12 dimers bind in a sequential fashion forming a multimeric L10(L12)X complex. Post-translationally, one or more lysine residues are methylated.

Its function is as follows. Forms part of the ribosomal stalk which helps the ribosome interact with GTP-bound translation factors. This is Large ribosomal subunit protein uL11 from Pseudomonas putida (strain ATCC 700007 / DSM 6899 / JCM 31910 / BCRC 17059 / LMG 24140 / F1).